The sequence spans 263 residues: HLA class II histocompatibility antigen, DM beta chain (263 aa).

The N-terminal stretch at 1–18 (MITFLPLLLGLSLGCTGA) is a signal peptide. Residues 19 to 112 (GGFVAHVEST…PFWGSLTNRT (94 aa)) are beta-1. The Lumenal segment spans residues 19-218 (GGFVAHVEST…PGLSPMQTLK (200 aa)). 2 disulfide bridges follow: Cys-29-Cys-97 and Cys-43-Cys-53. N-linked (GlcNAc...) asparagine glycosylation occurs at Asn-110. The segment at 113–207 (RPPSVQVAKT…GAPEPILRDW (95 aa)) is beta-2. In terms of domain architecture, Ig-like C1-type spans 114–208 (PPSVQVAKTT…APEPILRDWT (95 aa)). The cysteines at positions 135 and 192 are disulfide-linked. Positions 208–218 (TPGLSPMQTLK) are connecting peptide. Residues 219–239 (VSVSAVTLGLGLIIFSLGVIS) traverse the membrane as a helical segment. Topologically, residues 240-263 (WRRAGHSSYTPLPGSNYSEGWHIS) are cytoplasmic. Positions 248–251 (YTPL) match the YXXZ motif motif.

Belongs to the MHC class II family. In terms of assembly, heterodimer of an alpha chain (DMA) and a beta chain (DMB). Interacts with MHCII; this interaction mediates rapid selection of high-affinity peptides in a pH-dependent manner, with an optimum at pH 5.5.

Its subcellular location is the late endosome membrane. The protein localises to the lysosome membrane. Plays a critical role in catalyzing the release of class II-associated invariant chain peptide (CLIP) from newly synthesized MHC class II molecules and freeing the peptide binding site for acquisition of antigenic peptides. In B-cells, the interaction between HLA-DM and MHC class II molecules is regulated by HLA-DO. The polypeptide is HLA class II histocompatibility antigen, DM beta chain (HLA-DMB) (Homo sapiens (Human)).